Here is a 164-residue protein sequence, read N- to C-terminus: Lipoprotein signal peptidase (164 aa).

4 helical membrane-spanning segments follow: residues 8–28 (IVAAVAALIADQASKLWLLFV), 39–59 (VTPFFDLVLAWNTGISYGWFQ), 64–84 (VGATILLAIKAGAVVLLAIWM), and 91–111 (LATIGLGLIIGGAIGNAIDRF). Catalysis depends on residues D118 and D140. The helical transmembrane segment at 131 to 151 (YSWYVFNLADVAIVAGVIALL) threads the bilayer.

It belongs to the peptidase A8 family.

It localises to the cell inner membrane. The enzyme catalyses Release of signal peptides from bacterial membrane prolipoproteins. Hydrolyzes -Xaa-Yaa-Zaa-|-(S,diacylglyceryl)Cys-, in which Xaa is hydrophobic (preferably Leu), and Yaa (Ala or Ser) and Zaa (Gly or Ala) have small, neutral side chains.. It participates in protein modification; lipoprotein biosynthesis (signal peptide cleavage). This protein specifically catalyzes the removal of signal peptides from prolipoproteins. The sequence is that of Lipoprotein signal peptidase from Nitrobacter hamburgensis (strain DSM 10229 / NCIMB 13809 / X14).